A 123-amino-acid chain; its full sequence is MGGGGPPARVQGTEGSQTGGGAVAVSYHPNNLDTKPLSCLPILSNFLLISSNSSLTSSTSSPLLMSSRYASAVEIPSSSAYSSTNSIVASLSRIDTTSFELLMVSRLRSSTPGKPFCSVPSVA.

A disordered region spans residues 1–24 (MGGGGPPARVQGTEGSQTGGGAVA).

This is an uncharacterized protein from Halorubrum pleomorphic virus 1 (HRPV-1).